We begin with the raw amino-acid sequence, 329 residues long: uncharacterized protein (329 aa).

Coiled-coil stretches lie at residues 57 to 120 (KKEE…QEVT) and 225 to 251 (QRQR…GNMM).

This is an uncharacterized protein from Homo sapiens (Human).